A 148-amino-acid polypeptide reads, in one-letter code: Ribonuclease H (148 aa).

The RNase H type-1 domain occupies 1–141 (MKTVEIYTDG…ADELANLGVK (141 aa)). Positions 9, 47, 69, and 133 each coordinate Mg(2+).

It belongs to the RNase H family. As to quaternary structure, monomer. Mg(2+) serves as cofactor.

It localises to the cytoplasm. It catalyses the reaction Endonucleolytic cleavage to 5'-phosphomonoester.. Its function is as follows. Endonuclease that specifically degrades the RNA of RNA-DNA hybrids. This is Ribonuclease H from Hahella chejuensis (strain KCTC 2396).